The chain runs to 280 residues: Ribosomal RNA small subunit methyltransferase A (280 aa).

S-adenosyl-L-methionine is bound by residues His15, Leu17, Gly42, Glu64, Asp89, and Asn109.

It belongs to the class I-like SAM-binding methyltransferase superfamily. rRNA adenine N(6)-methyltransferase family. RsmA subfamily.

The protein localises to the cytoplasm. It catalyses the reaction adenosine(1518)/adenosine(1519) in 16S rRNA + 4 S-adenosyl-L-methionine = N(6)-dimethyladenosine(1518)/N(6)-dimethyladenosine(1519) in 16S rRNA + 4 S-adenosyl-L-homocysteine + 4 H(+). Functionally, specifically dimethylates two adjacent adenosines (A1518 and A1519) in the loop of a conserved hairpin near the 3'-end of 16S rRNA in the 30S particle. May play a critical role in biogenesis of 30S subunits. In Prochlorococcus marinus (strain MIT 9313), this protein is Ribosomal RNA small subunit methyltransferase A.